We begin with the raw amino-acid sequence, 60 residues long: MAVPKKKTSKSRKNMRRAHDFLTPPAASVCPQCKAPKLPHRACSSCGTYKGKEVIKSEEI.

The segment covering 1-16 (MAVPKKKTSKSRKNMR) has biased composition (basic residues). The segment at 1 to 20 (MAVPKKKTSKSRKNMRRAHD) is disordered.

It belongs to the bacterial ribosomal protein bL32 family.

The chain is Large ribosomal subunit protein bL32 from Geobacter metallireducens (strain ATCC 53774 / DSM 7210 / GS-15).